Here is a 134-residue protein sequence, read N- to C-terminus: Probable RNA-binding protein MJ0652 (134 aa).

The region spanning 11 to 108 is the CRM domain; that stretch reads RKLTGKMKRM…REGWKKYLAK (98 aa).

This Methanocaldococcus jannaschii (strain ATCC 43067 / DSM 2661 / JAL-1 / JCM 10045 / NBRC 100440) (Methanococcus jannaschii) protein is Probable RNA-binding protein MJ0652.